Here is a 740-residue protein sequence, read N- to C-terminus: NAD(P)H-quinone oxidoreductase subunit 5, chloroplastic (740 aa).

16 helical membrane-spanning segments follow: residues 9–29 (WIIP…LLLF), 40–60 (WSFL…YLSI), 89–109 (IDPL…LVLI), 125–145 (FAYM…SNLI), 147–167 (IYFF…FWFT), 185–205 (GDFG…SFEF), 221–241 (VNLL…IAKS), 258–278 (TPIS…FLVA), 283–303 (LFIV…ITIL), 327–347 (LGYM…FHLI), 354–374 (ALLF…VGYS), 396–416 (TAFL…CFWS), 425–445 (LLFS…TAFY), 547–567 (ILFP…IGIP), 606–626 (FSVS…KPFY), and 718–738 (ISSY…FLKI).

This sequence belongs to the complex I subunit 5 family. As to quaternary structure, NDH is composed of at least 16 different subunits, 5 of which are encoded in the nucleus.

The protein resides in the plastid. The protein localises to the chloroplast thylakoid membrane. It carries out the reaction a plastoquinone + NADH + (n+1) H(+)(in) = a plastoquinol + NAD(+) + n H(+)(out). The catalysed reaction is a plastoquinone + NADPH + (n+1) H(+)(in) = a plastoquinol + NADP(+) + n H(+)(out). Its function is as follows. NDH shuttles electrons from NAD(P)H:plastoquinone, via FMN and iron-sulfur (Fe-S) centers, to quinones in the photosynthetic chain and possibly in a chloroplast respiratory chain. The immediate electron acceptor for the enzyme in this species is believed to be plastoquinone. Couples the redox reaction to proton translocation, and thus conserves the redox energy in a proton gradient. This chain is NAD(P)H-quinone oxidoreductase subunit 5, chloroplastic (ndhF), found in Aethionema cordifolium (Lebanon stonecress).